The following is a 490-amino-acid chain: O-acetyltransferase PaAT-2 (490 aa).

Catalysis depends on histidine 165, which acts as the Proton acceptor.

It belongs to the plant acyltransferase family.

The protein operates within mycotoxin biosynthesis. Its function is as follows. O-acetyltransferase; part of the 2 gene clusters that mediate the biosynthesis of fusicoccins, diterpene glucosides that display phytohormone-like activity and function as potent activators of plasma membrane H(+)-ATPases in plants by modifying 14-3-3 proteins and cause the plant disease constriction canker. The first step in the pathway is performed by the fusicoccadiene synthase PaFS that possesses both prenyl transferase and terpene cyclase activity, converting isopentenyl diphosphate and dimethylallyl diphosphate into geranylgeranyl diphosphate (GGDP) and successively converting GGDP into fusicocca-2,10(14)-diene, a precursor for fusicoccin H. The second step is the oxidation at the C-8 position by the cytochrome P450 monooxygenase PaP450-2 to yield fusicocca-2,10(14)-diene-8-beta-ol. The cytochrome P450 monooxygenase PaP450-1 then catalyzes the hydroxylation at the C-16 position to produce fusicocca-2,10(14)-diene-8-beta,16-diol. The dioxygenase fc-dox then catalyzes the 16-oxydation of fusicocca-2,10(14)-diene-8-beta,16-diol to yield an aldehyde (8-beta-hydroxyfusicocca-1,10(14)-dien-16-al). The short-chain dehydrogenase/reductase fc-sdr catalyzes the reduction of the aldehyde to yield fusicocca-1,10(14)-diene-8-beta,16-diol. The next step is the hydroxylation at C-9 performed by the cytochrome P450 monooxygenase PaP450-3 that leads to fusicoccin H aglycon which is glycosylated to fusicoccin H by the O-glycosyltransferase PaGT. Hydroxylation at C-12 by the cytochrome P450 monooxygenase PaP450-4 leads then to the production of fusicoccin Q and is followed by methylation by the O-methyltransferase PaMT to yield fusicoccin P. Fusicoccin P is further converted to fusicoccin J via prenylation by the O-glucose prenyltransferase PaPT. Cytochrome P450 monooxygenase PaP450-5 then performs hydroxylation at C-19 to yield dideacetyl-fusicoccin A which is acetylated to 3'-O-deacetyl-fusicoccin A by the O-acetyltransferase PaAT-2. Finally, a another acetylation by the O-acetyltransferase PaAT-1 yields fusicoccin A. The chain is O-acetyltransferase PaAT-2 from Phomopsis amygdali (Fusicoccum amygdali).